The chain runs to 148 residues: Cuticle protein CP1499 (148 aa).

In terms of tissue distribution, calcified shell.

This Cancer pagurus (Rock crab) protein is Cuticle protein CP1499.